We begin with the raw amino-acid sequence, 62 residues long: uncharacterized protein (62 aa).

This is an uncharacterized protein from Potato leafroll virus (strain Potato/Scotland/strain 1/1984) (PLrV).